We begin with the raw amino-acid sequence, 761 residues long: MRYNQFSYIPTKPNEAFEELKGLGFPLNKKNSDKANLEAFLRHSFLNQTDTDYALSLLIVDAKTDALTFFKSNSDLTLENLQWIYLQLLGFIPFVDFKDPKAFLQDINFPVSYDNIFQSLHHLLACRGKSGNTLIDQLVADGLLHADNHYHFFNGKSLATFNTNQLIREVVYVETSLDTMSSGEHDLVKVNIIRPTTEHTIPTMMTASPYHQGINDPAADQKTYQMEGALAVKQPKHIQVDTKPFKEEVKHPSKLPISPATESFTHIDSYSLNDYFLSRGFANIYVSGVGTAGSTGFMTSGDYQQIQSFKAVIDWLNGKVTAFTSHKRDKQVKANWSNGLVATTGKSYLGTMSTGLATTGVEGLKVIIAEAAISTWYDYYRENGLVCSPGGYPGEDLDVLTELTYSRNLLAGDYIKNNDCYQALLNEQSKAIDRQSGDYNQYWHDRNYLTHVNNVKSRVVYTHGLQDWNVKPRHVYKVFNALPQTIKKHLFLHQGQHVYMHNWQSIDFRESMNALLSQELLGIDNHFQLEEVIWQDNTTEQTWQVLDAFGGNHQEQIGLGDSKKLIDNHYDKEAFDTYCKDFNVFKNDLFKGNNKTNQITINLPLKKNYLLNGQCKLHLRVKTSDKKAILSAQILDYGPKKRFKDTPTIKFLNSLDNGKNFAREALRELPFTKDHYRVISKGVLNLQNRTDLLTIEAIEPEQWFDIEFSLQPSIYQLSKGDNLRIILYTTDFEHTIRDNASYSITVDLSQSYLTIPTNQGN.

Catalysis depends on charge relay system residues S347, D467, and H497.

Belongs to the peptidase S15 family. Homodimer.

It is found in the cytoplasm. The catalysed reaction is Hydrolyzes Xaa-Pro-|- bonds to release unblocked, N-terminal dipeptides from substrates including Ala-Pro-|-p-nitroanilide and (sequentially) Tyr-Pro-|-Phe-Pro-|-Gly-Pro-|-Ile.. Functionally, removes N-terminal dipeptides sequentially from polypeptides having unsubstituted N-termini provided that the penultimate residue is proline. The chain is Xaa-Pro dipeptidyl-peptidase from Streptococcus agalactiae serotype V (strain ATCC BAA-611 / 2603 V/R).